The primary structure comprises 432 residues: GTPase HflX (432 aa).

Residues 202 to 367 enclose the Hflx-type G domain; the sequence is FTVALVGYTN…ELRRAVGRAM (166 aa). GTP-binding positions include 208 to 215, 233 to 237, 255 to 258, 321 to 324, and 345 to 347; these read GYTNAGKS, FATLD, DTVG, NKID, and SAQ. Mg(2+) is bound by residues S215 and T235.

It belongs to the TRAFAC class OBG-HflX-like GTPase superfamily. HflX GTPase family. As to quaternary structure, monomer. Associates with the 50S ribosomal subunit. Mg(2+) serves as cofactor.

The protein resides in the cytoplasm. Its function is as follows. GTPase that associates with the 50S ribosomal subunit and may have a role during protein synthesis or ribosome biogenesis. The sequence is that of GTPase HflX from Magnetococcus marinus (strain ATCC BAA-1437 / JCM 17883 / MC-1).